The primary structure comprises 242 residues: Small ribosomal subunit protein uS2 (242 aa).

Belongs to the universal ribosomal protein uS2 family.

This chain is Small ribosomal subunit protein uS2, found in Neisseria meningitidis serogroup C (strain 053442).